Here is a 616-residue protein sequence, read N- to C-terminus: Adenylosuccinate synthetase 1 (616 aa).

The disordered stretch occupies residues 1–27; sequence MDKQAERGQSAGPVKTPQGTQPPAHNY. The segment covering 17-27 has biased composition (polar residues); that stretch reads PQGTQPPAHNY. GTP-binding positions include 87–93 and 117–119; these read GDEGKGK and GHT. The active-site Proton acceptor is the D88. Mg(2+) is bound by residues D88 and G117. IMP is bound by residues 88–91, 115–118, T202, K216, Q328, T343, and K472; these read DEGK and NAGH. The Proton donor role is filled by H118. A substrate-binding site is contributed by 468–474; sequence AVTKKPR. GTP-binding positions include R474 and 603–605; that span reads GNG.

Belongs to the adenylosuccinate synthetase family. As to quaternary structure, homodimer. Requires Mg(2+) as cofactor.

The protein resides in the cytoplasm. The enzyme catalyses IMP + L-aspartate + GTP = N(6)-(1,2-dicarboxyethyl)-AMP + GDP + phosphate + 2 H(+). It participates in purine metabolism; AMP biosynthesis via de novo pathway; AMP from IMP: step 1/2. In terms of biological role, plays an important role in the salvage pathway for purine nucleotide biosynthesis. Catalyzes the first committed step in the biosynthesis of AMP from IMP. This Trypanosoma cruzi (strain CL Brener) protein is Adenylosuccinate synthetase 1.